The sequence spans 728 residues: 1,4-alpha-glucan branching enzyme GlgB (728 aa).

Asp405 serves as the catalytic Nucleophile. Glu458 acts as the Proton donor in catalysis.

Belongs to the glycosyl hydrolase 13 family. GlgB subfamily. As to quaternary structure, monomer.

It carries out the reaction Transfers a segment of a (1-&gt;4)-alpha-D-glucan chain to a primary hydroxy group in a similar glucan chain.. The protein operates within glycan biosynthesis; glycogen biosynthesis. In terms of biological role, catalyzes the formation of the alpha-1,6-glucosidic linkages in glycogen by scission of a 1,4-alpha-linked oligosaccharide from growing alpha-1,4-glucan chains and the subsequent attachment of the oligosaccharide to the alpha-1,6 position. The protein is 1,4-alpha-glucan branching enzyme GlgB of Shigella boydii serotype 4 (strain Sb227).